Consider the following 100-residue polypeptide: Putative protein BCL8 (100 aa).

In terms of tissue distribution, expressed in prostate and testis.

In Homo sapiens (Human), this protein is Putative protein BCL8 (NBEAP1).